Consider the following 188-residue polypeptide: dCTP deaminase (188 aa).

DCTP contacts are provided by residues 111–116 (KSTYAR), 135–137 (TLE), Gln-156, Tyr-170, and Gln-180. Catalysis depends on Glu-137, which acts as the Proton donor/acceptor.

The protein belongs to the dCTP deaminase family. Homotrimer.

It catalyses the reaction dCTP + H2O + H(+) = dUTP + NH4(+). It functions in the pathway pyrimidine metabolism; dUMP biosynthesis; dUMP from dCTP (dUTP route): step 1/2. Functionally, catalyzes the deamination of dCTP to dUTP. This chain is dCTP deaminase, found in Chromohalobacter salexigens (strain ATCC BAA-138 / DSM 3043 / CIP 106854 / NCIMB 13768 / 1H11).